The primary structure comprises 143 residues: Cofilin (143 aa).

Position 4 is a phosphoserine (Ser4). The region spanning 5-137 is the ADF-H domain; that stretch reads GVAVADESLT…SYDSVLERVS (133 aa).

It belongs to the actin-binding proteins ADF family. Interacts with actin and AIP1 in a ternary complex. Post-translationally, the N-terminus is blocked.

The protein resides in the cytoplasm. It is found in the cytoskeleton. It localises to the nucleus matrix. In terms of biological role, controls reversibly actin polymerization and depolymerization in a pH-sensitive manner. It has the ability to bind G- and F-actin in a 1:1 ratio of cofilin to actin. Binding to F-actin is regulated by tropomyosin. It is the major component of intranuclear and cytoplasmic actin rods. Required for accumulation of actin at the cell division site via depolymerizing actin at the cell ends. In association with myosin II has a role in the assembly of the contractile ring via severing actin filaments. Involved in the maintenance of the contractile ring once formed. In association with profilin and capping protein, has a role in the mitotic reorganization of the actin cytoskeleton. In effect, yeast cofilin increases the rate of actin polymerization by making new ends available for actin subunit addition. Such a protein complex is important for the polarized growth of yeast cells. The sequence is that of Cofilin (COF1) from Saccharomyces cerevisiae (strain ATCC 204508 / S288c) (Baker's yeast).